A 160-amino-acid polypeptide reads, in one-letter code: Glucagon-1 (160 aa).

The signal sequence occupies residues 1 to 22; that stretch reads MSDPGFLAAPVLLLLLVSLASA. 3 consecutive propeptides follow at residues 23-40, 74-79, and 116-127; these read SLEQAASRDDDSAERPLS, GGSELQ, and DGGDHLAENSED. Residues 112–132 are disordered; it reads KSRRDGGDHLAENSEDKRHAE.

It belongs to the glucagon family.

It is found in the secreted. Functionally, promotes hydrolysis of glycogen and lipids, and raises the blood sugar level. The sequence is that of Glucagon-1 (gcg1) from Petromyzon marinus (Sea lamprey).